The sequence spans 173 residues: Crossover junction endodeoxyribonuclease RuvC (173 aa).

Active-site residues include D8, E67, and D139. Mg(2+) contacts are provided by D8, E67, and D139.

The protein belongs to the RuvC family. As to quaternary structure, homodimer which binds Holliday junction (HJ) DNA. The HJ becomes 2-fold symmetrical on binding to RuvC with unstacked arms; it has a different conformation from HJ DNA in complex with RuvA. In the full resolvosome a probable DNA-RuvA(4)-RuvB(12)-RuvC(2) complex forms which resolves the HJ. Mg(2+) serves as cofactor.

The protein localises to the cytoplasm. The catalysed reaction is Endonucleolytic cleavage at a junction such as a reciprocal single-stranded crossover between two homologous DNA duplexes (Holliday junction).. Functionally, the RuvA-RuvB-RuvC complex processes Holliday junction (HJ) DNA during genetic recombination and DNA repair. Endonuclease that resolves HJ intermediates. Cleaves cruciform DNA by making single-stranded nicks across the HJ at symmetrical positions within the homologous arms, yielding a 5'-phosphate and a 3'-hydroxyl group; requires a central core of homology in the junction. The consensus cleavage sequence is 5'-(A/T)TT(C/G)-3'. Cleavage occurs on the 3'-side of the TT dinucleotide at the point of strand exchange. HJ branch migration catalyzed by RuvA-RuvB allows RuvC to scan DNA until it finds its consensus sequence, where it cleaves and resolves the cruciform DNA. This Shigella flexneri serotype 5b (strain 8401) protein is Crossover junction endodeoxyribonuclease RuvC.